The chain runs to 881 residues: Valine--tRNA ligase (881 aa).

The short motif at 42-52 is the 'HIGH' region element; the sequence is PNITGDLHVGH. The short motif at 554-558 is the 'KMSKS' region element; that stretch reads KMSKS. Lys-557 lines the ATP pocket.

Belongs to the class-I aminoacyl-tRNA synthetase family. ValS type 1 subfamily. Monomer.

The protein resides in the cytoplasm. It catalyses the reaction tRNA(Val) + L-valine + ATP = L-valyl-tRNA(Val) + AMP + diphosphate. Functionally, catalyzes the attachment of valine to tRNA(Val). As ValRS can inadvertently accommodate and process structurally similar amino acids such as threonine, to avoid such errors, it has a 'posttransfer' editing activity that hydrolyzes mischarged Thr-tRNA(Val) in a tRNA-dependent manner. This is Valine--tRNA ligase from Wigglesworthia glossinidia brevipalpis.